Here is a 197-residue protein sequence, read N- to C-terminus: Holliday junction branch migration complex subunit RuvA (197 aa).

The interval 1–64 is domain I; the sequence is MIDSIVGIIQ…LSELECYGFL (64 aa). Residues 65 to 143 are domain II; it reads TREERELFLK…KEFKVASTSG (79 aa). The tract at residues 144–152 is flexible linker; the sequence is KEEKTYEKL. The domain III stretch occupies residues 152-197; sequence LEEISLALLSLGYDIDEVNQVLSSEDFSELSLEDGIKLALKKLSKI.

This sequence belongs to the RuvA family. As to quaternary structure, homotetramer. Forms an RuvA(8)-RuvB(12)-Holliday junction (HJ) complex. HJ DNA is sandwiched between 2 RuvA tetramers; dsDNA enters through RuvA and exits via RuvB. An RuvB hexamer assembles on each DNA strand where it exits the tetramer. Each RuvB hexamer is contacted by two RuvA subunits (via domain III) on 2 adjacent RuvB subunits; this complex drives branch migration. In the full resolvosome a probable DNA-RuvA(4)-RuvB(12)-RuvC(2) complex forms which resolves the HJ.

The protein localises to the cytoplasm. Its function is as follows. The RuvA-RuvB-RuvC complex processes Holliday junction (HJ) DNA during genetic recombination and DNA repair, while the RuvA-RuvB complex plays an important role in the rescue of blocked DNA replication forks via replication fork reversal (RFR). RuvA specifically binds to HJ cruciform DNA, conferring on it an open structure. The RuvB hexamer acts as an ATP-dependent pump, pulling dsDNA into and through the RuvAB complex. HJ branch migration allows RuvC to scan DNA until it finds its consensus sequence, where it cleaves and resolves the cruciform DNA. The protein is Holliday junction branch migration complex subunit RuvA of Caldicellulosiruptor bescii (strain ATCC BAA-1888 / DSM 6725 / KCTC 15123 / Z-1320) (Anaerocellum thermophilum).